Here is a 739-residue protein sequence, read N- to C-terminus: Exocyst complex component 3-like protein (739 aa).

The tract at residues 1–370 (MDSAARDKTQ…DVSDLEPLLT (370 aa)) is mediates interaction with EXOC2, EXOC4 and EXOC5.

It belongs to the SEC6 family. Interacts with EXOC2, EXOC4 and EXOC5; may be part of the exocyst.

Its subcellular location is the cytoplasmic vesicle. The protein resides in the secretory vesicle. Functionally, as part of the exocyst, may play a role in regulated exocytosis of insulin granules. This Bos taurus (Bovine) protein is Exocyst complex component 3-like protein (EXOC3L1).